A 334-amino-acid chain; its full sequence is 3-ketodihydrosphingosine reductase (334 aa).

An N-terminal signal peptide occupies residues methionine 1 to lysine 20. The NADPH site is built by glycine 36, serine 38, serine 39, glycine 40, arginine 62, lysine 66, aspartate 100, and isoleucine 101. The short motif at glycine 36–glycine 40 is the GXSXG element. Serine 182 functions as the Proton donor in the catalytic mechanism. The active-site Proton acceptor is the tyrosine 196. The NADP(+) site is built by tyrosine 196 and lysine 200. Catalysis depends on lysine 200, which acts as the Lowers pKa of active site Tyr.

It belongs to the short-chain dehydrogenases/reductases (SDR) family.

The protein resides in the endoplasmic reticulum. It carries out the reaction sphinganine + NADP(+) = 3-oxosphinganine + NADPH + H(+). Its pathway is lipid metabolism; sphingolipid metabolism. Functionally, catalyzes the reduction of 3'-oxosphinganine (3-ketodihydrosphingosine/KDS) to sphinganine (dihydrosphingosine/DHS), the second step of de novo sphingolipid biosynthesis. This is 3-ketodihydrosphingosine reductase (ksrA-1) from Dictyostelium discoideum (Social amoeba).